A 331-amino-acid chain; its full sequence is ADP,ATP carrier protein 2, mitochondrial (331 aa).

3 Solcar repeats span residues 29 to 122 (KNFA…FKRM), 134 to 226 (KWFG…LKPV), and 238 to 320 (ASFA…LQIL). 5 consecutive transmembrane segments (helical) span residues 31–58 (FAID…VKLL), 99–123 (TANV…KRMF), 132–152 (YWKW…SSLF), 202–223 (FNIS…YDSL), and 237–257 (FASF…SYPI). 2 residues coordinate ADP: arginine 104 and lysine 116. An ADP-binding site is contributed by arginine 261. Residues 261–266 (RRRMMM) are important for transport activity. A Nucleotide carrier signature motif motif is present at residues 261–266 (RRRMMM). The chain crosses the membrane as a helical span at residues 297 to 317 (AGANILRAIAGAGVLSGYDQL).

Belongs to the mitochondrial carrier (TC 2.A.29) family. In terms of assembly, monomer.

It is found in the mitochondrion inner membrane. The catalysed reaction is ADP(in) + ATP(out) = ADP(out) + ATP(in). With respect to regulation, the matrix-open state (m-state) is inhibited by the membrane-permeable bongkrekic acid (BKA). The cytoplasmic-open state (c-state) is inhibited by the membrane-impermeable toxic inhibitor carboxyatractyloside (CATR). Its function is as follows. ADP:ATP antiporter that mediates import of ADP into the mitochondrial matrix for ATP synthesis, and export of ATP out to fuel the cell. Cycles between the cytoplasmic-open state (c-state) and the matrix-open state (m-state): operates by the alternating access mechanism with a single substrate-binding site intermittently exposed to either the cytosolic (c-state) or matrix (m-state) side of the inner mitochondrial membrane. The chain is ADP,ATP carrier protein 2, mitochondrial (ANT-G2) from Triticum aestivum (Wheat).